Reading from the N-terminus, the 291-residue chain is Inhibitory synaptic factor 1 (291 aa).

Residues 1–25 form a disordered region; sequence MNIRGAPDLGQPSDDPNSGGERERI. Positions 30-63 form a coiled coil; sequence KMVIGQLEGILRELKEVAKELREVVSQIDKLTSD. Disordered stretches follow at residues 120 to 186 and 201 to 291; these read TPSD…ERVR and EEGD…KGKN. Over residues 201–213 the composition is skewed to acidic residues; sequence EEGDGEEVEEEEA. The span at 262 to 284 shows a compositional bias: polar residues; that stretch reads RNSSTQTVSDKSTQTVLPYTATK.

It belongs to the INSYN1 family. Interacts with GPHN.

The protein resides in the postsynaptic density. Functionally, component of the protein machinery at the inhibitory synapses, probably acting as a scaffold. Inhibitory synapses dampen neuronal activity through postsynaptic hyperpolarization. This synaptic inhibition is fundamental for the functioning of the central nervous system, shaping and orchestrating the flow of information through neuronal networks to generate a precise neural code. The sequence is that of Inhibitory synaptic factor 1 (Insyn1) from Rattus norvegicus (Rat).